Here is a 216-residue protein sequence, read N- to C-terminus: Probable transaldolase (216 aa).

K83 serves as the catalytic Schiff-base intermediate with substrate.

It belongs to the transaldolase family. Type 3B subfamily.

Its subcellular location is the cytoplasm. The enzyme catalyses D-sedoheptulose 7-phosphate + D-glyceraldehyde 3-phosphate = D-erythrose 4-phosphate + beta-D-fructose 6-phosphate. Its pathway is carbohydrate degradation; pentose phosphate pathway; D-glyceraldehyde 3-phosphate and beta-D-fructose 6-phosphate from D-ribose 5-phosphate and D-xylulose 5-phosphate (non-oxidative stage): step 2/3. Transaldolase is important for the balance of metabolites in the pentose-phosphate pathway. This is Probable transaldolase from Shouchella clausii (strain KSM-K16) (Alkalihalobacillus clausii).